The following is a 639-amino-acid chain: Alpha-dioxygenase 1 (639 aa).

H163 (proton acceptor) is an active-site residue. D164 contributes to the Ca(2+) binding site. H168 lines the heme b pocket. Residues T216, W218, D220, and S222 each coordinate Ca(2+). 3 residues coordinate heme b: H389, R486, and R490.

This sequence belongs to the peroxidase family. Forms monomers in solution. Heme b serves as cofactor. Ca(2+) is required as a cofactor. Expressed in roots (epiderm), mature flowers (e.g. anthers) and senescing leaves.

The protein resides in the lipid droplet. The enzyme catalyses a 1,2-saturated fatty acid + O2 = a (2R)-2-hydroperoxy fatty acid. It carries out the reaction (9Z,12Z,15Z)-octadecatrienoate + O2 = (R)-2-hydroperoxy-(9Z,12Z,15Z)-octadecatrienoate. The catalysed reaction is hexadecanoate + O2 = (2R)-2-hydroperoxyhexadecanoate. It catalyses the reaction (9Z,12Z)-octadecadienoate + O2 = (2R,9Z,12Z)-2-hydroperoxyoctadecadienoate. The enzyme catalyses (9Z)-octadecenoate + O2 = (2R,9Z)-2-hydroperoxyoctadecenoate. Functionally, alpha-dioxygenase that catalyzes the primary oxygenation step of a variety of 14-20 carbon fatty acids, containing up to three unsaturated bonds, into their corresponding 2R-hydroperoxides. Involved in the production of oxylipins that function in cell signaling, wound healing, and protection from infection. Mediates protection against oxidative stress and cell death, probably by generating some lipid-derived molecules. Promotes local and systemic plant defense in a salicylic acid (SA)-dependent manner, including the establishment of systemic acquired resistance (SAR) in response to incompatible interaction. Involved in a negative regulation of abscisic acid (ABA)-mediated signaling pathway. The sequence is that of Alpha-dioxygenase 1 from Arabidopsis thaliana (Mouse-ear cress).